The sequence spans 375 residues: Aminomethyltransferase (375 aa).

This sequence belongs to the GcvT family. In terms of assembly, the glycine cleavage system is composed of four proteins: P, T, L and H.

It carries out the reaction N(6)-[(R)-S(8)-aminomethyldihydrolipoyl]-L-lysyl-[protein] + (6S)-5,6,7,8-tetrahydrofolate = N(6)-[(R)-dihydrolipoyl]-L-lysyl-[protein] + (6R)-5,10-methylene-5,6,7,8-tetrahydrofolate + NH4(+). In terms of biological role, the glycine cleavage system catalyzes the degradation of glycine. The chain is Aminomethyltransferase from Ralstonia nicotianae (strain ATCC BAA-1114 / GMI1000) (Ralstonia solanacearum).